A 142-amino-acid polypeptide reads, in one-letter code: Midkine-B (142 aa).

Positions 1-20 (MELRAFCVILLITILAVSSQ) are cleaved as a signal peptide. Disulfide bonds link Cys-36–Cys-60, Cys-44–Cys-69, Cys-51–Cys-73, Cys-83–Cys-115, and Cys-93–Cys-125.

This sequence belongs to the pleiotrophin family. As to expression, in adults, expression is highest in the brain, eye and bone, with lower expression in the heart and lung. Not expressed in the ovary. In the tailbud stage embryo, expressed in the head and tail regions as well as in the central nervous system (CNS).

The protein localises to the secreted. Secreted protein that functions as a cytokine and growth factor and mediates its signal through cell-surface proteoglycan and non-proteoglycan receptors. Binds cell-surface proteoglycan receptors via their chondroitin sulfate (CS) groups. Thereby regulates many processes like inflammatory response, cell proliferation, cell adhesion, cell growth, cell survival, tissue regeneration, cell differentiation and cell migration. Inhibits mesoderm formation and promotes neural formation during development. Plays a role in development of the neuromuscular junction (NMJ). Has antibacterial activity against both Gram-positive and Gram-negative bacteria. The polypeptide is Midkine-B (mdk-b) (Xenopus laevis (African clawed frog)).